The primary structure comprises 420 residues: Phosphoribosylamine--glycine ligase (420 aa).

The ATP-grasp domain occupies 108–314 (KEIMVKYGVP…FAQNITDILD (207 aa)). 134 to 195 (IEKHGAPIVV…EEFLEGEEFS (62 aa)) contributes to the ATP binding site. Residues glutamate 284 and asparagine 286 each coordinate Mg(2+).

This sequence belongs to the GARS family. Mg(2+) is required as a cofactor. Mn(2+) serves as cofactor.

The enzyme catalyses 5-phospho-beta-D-ribosylamine + glycine + ATP = N(1)-(5-phospho-beta-D-ribosyl)glycinamide + ADP + phosphate + H(+). It participates in purine metabolism; IMP biosynthesis via de novo pathway; N(1)-(5-phospho-D-ribosyl)glycinamide from 5-phospho-alpha-D-ribose 1-diphosphate: step 2/2. The polypeptide is Phosphoribosylamine--glycine ligase (Streptococcus pneumoniae serotype 4 (strain ATCC BAA-334 / TIGR4)).